Consider the following 177-residue polypeptide: VKSTNLMAFVATKMLERQEDLDTCTEMQVEKMKTSTKARLRTESSFAPRTWEDAIKDEILRRSVDTSSLDKWPELKQELENVSDALKADSLWLPMKSLSLYSKVSNQELSSIPIGEMKHQILTRLKLICSRLEKLDLNLSKAVLGIQNSEDLILIIYNRDVCKNTILMIKSLCNSLI.

2 consecutive short sequence motifs (nuclear export signal) follow at residues 91 to 100 (LWLPMKSLSL) and 117 to 127 (MKHQILTRLKL).

As to quaternary structure, binds M1 protein. May interact with human nucleoporins and exportin XPO1/CRM1.

Its subcellular location is the virion. The protein localises to the host nucleus. In terms of biological role, mediates the nuclear export of encapsidated genomic RNAs (ribonucleoproteins, RNPs). Acts as an adapter between viral RNPs complexes and the nuclear export machinery of the cell. Possesses no intrinsic RNA-binding activity, but includes a C-terminal M1-binding domain. This domain is believed to allow recognition of RNPs to which the M1 protein is bound. Because the M1 protein is not available in large quantities until the later stages of infection, such an indirect recognition mechanism probably ensures that genomic RNPs are not exported from the nucleus before sufficient quantities of viral mRNA and progeny genomic RNA have been synthesized. Furthermore, the RNPs enters the cytoplasm only when they have associated with the M1 protein that is necessary to guide them to the plasma membrane. May down-regulate viral RNA synthesis when overproduced. The protein is Nuclear export protein (NS) of Influenza C virus (strain C/Great lakes/1167/1954).